The following is a 407-amino-acid chain: MTKIVEIVNETRLLRAQGVTAPAGFQAAGITAGIKVSGAPDLALVFNEGPDYAAAGVFTRNKVKAAPVLWTQRVLSTGQLRAVILNSGGANACTGPAGFQDAHTTAEAVAAALSDWGTETGAIEVAVCSTGLIGDRLPMDKVLAGVRAIVHKMAGGVTGGDDAAHAIMTTDTVPKQVALHNRNKWTVGGMAKGAGMLAPSLATMLCVLTTDAVVEPAALDQALRRATAHTFDRLDIDGCCSTNDTVLLLASGASGITPPQADLDDAVRHACDDLCAQLQADAEGVTKRVTVTVIGAASDDDALVAARMIARDNLVKTAVFGSDPNWGRVLAAVGMAPVALDPDRLCMSFNGAAVCIDGVGTPCARDVDLSTADIDITVDLRIGDSAATIRTTDLSHTYVEENSAYSS.

The substrate site is built by threonine 169, lysine 192, threonine 203, glutamate 283, asparagine 402, and serine 407. The active-site Nucleophile is the threonine 203.

Belongs to the ArgJ family. Heterotetramer of two alpha and two beta chains.

It localises to the cytoplasm. It catalyses the reaction N(2)-acetyl-L-ornithine + L-glutamate = N-acetyl-L-glutamate + L-ornithine. It carries out the reaction L-glutamate + acetyl-CoA = N-acetyl-L-glutamate + CoA + H(+). It functions in the pathway amino-acid biosynthesis; L-arginine biosynthesis; L-ornithine and N-acetyl-L-glutamate from L-glutamate and N(2)-acetyl-L-ornithine (cyclic): step 1/1. The protein operates within amino-acid biosynthesis; L-arginine biosynthesis; N(2)-acetyl-L-ornithine from L-glutamate: step 1/4. Catalyzes two activities which are involved in the cyclic version of arginine biosynthesis: the synthesis of N-acetylglutamate from glutamate and acetyl-CoA as the acetyl donor, and of ornithine by transacetylation between N(2)-acetylornithine and glutamate. This chain is Arginine biosynthesis bifunctional protein ArgJ, found in Mycobacterium leprae (strain TN).